A 417-amino-acid polypeptide reads, in one-letter code: Pygopus homolog 1 (417 aa).

Basic and acidic residues predominate over residues 1-11 (MSAEQDKEPIA). Disordered regions lie at residues 1–71 (MSAE…AANP), 175–265 (HFRQ…MEDP), and 284–318 (ENSRSGSAEATNNHANGTQNKPRQPRGAADLCTPD). The segment covering 18–27 (GDSGLDGLGG) has biased composition (gly residues). The Nuclear localization signal motif lies at 35-41 (PDKKKRK). Polar residues-rich tracts occupy residues 180–221 (SAEN…TNHS), 240–256 (DFTQGATKTPNQNSSTH), and 284–305 (ENSRSGSAEATNNHANGTQNKP). The PHD-type zinc-finger motif lies at 338–396 (VYPCGICTNEVNDDQDAILCEASCQKWFHRICTGMTETAYGLLTAEASAVWGCDTCMAD). The segment at 339–386 (YPCGICTNEVNDDQDAILCEASCQKWFHRICTGMTETAYGLLTAEASA) is interaction with H3K4me2. The interval 371–389 (GMTETAYGLLTAEASAVWG) is interaction with BCL9.

Interacts with BCL9 via The PHD-type zinc finger motiv, and thereby becomes part of the nuclear beta-catenin/TCF complex. Found in a complex with BCL9L, CDC73, CTNNB1 and PYGO1. Interacts with histone H3 mono-, di- or tri-methylated at 'Lys4' (H3K4me1, H3K4me2, H3K4me3); the interaction is enhanced by the interaction with BCL9.

It localises to the nucleus. Involved in signal transduction through the Wnt pathway. The protein is Pygopus homolog 1 (Pygo1) of Mus musculus (Mouse).